The following is a 274-amino-acid chain: tRNA (guanine-N(1)-)-methyltransferase (274 aa).

S-adenosyl-L-methionine-binding positions include Gly116 and 140-145; that span reads LGDYVL.

The protein belongs to the RNA methyltransferase TrmD family. In terms of assembly, homodimer.

The protein resides in the cytoplasm. The enzyme catalyses guanosine(37) in tRNA + S-adenosyl-L-methionine = N(1)-methylguanosine(37) in tRNA + S-adenosyl-L-homocysteine + H(+). Its function is as follows. Specifically methylates guanosine-37 in various tRNAs. In Arthrobacter sp. (strain FB24), this protein is tRNA (guanine-N(1)-)-methyltransferase.